The primary structure comprises 1409 residues: DNA-directed RNA polymerase subunit beta' (1409 aa).

The Zn(2+) site is built by Cys-72, Cys-74, Cys-87, and Cys-90. Mg(2+) is bound by residues Asp-462, Asp-464, and Asp-466. Residues Cys-816, Cys-890, Cys-897, and Cys-900 each contribute to the Zn(2+) site.

This sequence belongs to the RNA polymerase beta' chain family. As to quaternary structure, the RNAP catalytic core consists of 2 alpha, 1 beta, 1 beta' and 1 omega subunit. When a sigma factor is associated with the core the holoenzyme is formed, which can initiate transcription. The cofactor is Mg(2+). Requires Zn(2+) as cofactor.

It carries out the reaction RNA(n) + a ribonucleoside 5'-triphosphate = RNA(n+1) + diphosphate. Functionally, DNA-dependent RNA polymerase catalyzes the transcription of DNA into RNA using the four ribonucleoside triphosphates as substrates. The protein is DNA-directed RNA polymerase subunit beta' of Aromatoleum aromaticum (strain DSM 19018 / LMG 30748 / EbN1) (Azoarcus sp. (strain EbN1)).